A 444-amino-acid chain; its full sequence is Chromosome partition protein MukF (444 aa).

The segment at Leu-212–Ile-240 is leucine-zipper.

Belongs to the MukF family. In terms of assembly, interacts, and probably forms a ternary complex, with MukE and MukB via its C-terminal region. The complex formation is stimulated by calcium or magnesium. It is required for an interaction between MukE and MukB.

The protein localises to the cytoplasm. The protein resides in the nucleoid. Its function is as follows. Involved in chromosome condensation, segregation and cell cycle progression. May participate in facilitating chromosome segregation by condensation DNA from both sides of a centrally located replisome during cell division. Not required for mini-F plasmid partitioning. Probably acts via its interaction with MukB and MukE. Overexpression results in anucleate cells. It has a calcium binding activity. This is Chromosome partition protein MukF from Haemophilus influenzae (strain PittGG).